The sequence spans 219 residues: uncharacterized protein (219 aa).

Positions 1–17 are cleaved as a signal peptide; it reads MFKKIIILFLGIFLLSS. Residue cysteine 18 is the site of N-palmitoyl cysteine attachment. Cysteine 18 is lipidated: S-diacylglycerol cysteine. The tract at residues 110-136 is disordered; the sequence is KAESNATQSNNDMTLSKANKKVRKDDS. Residues 112–126 are compositionally biased toward polar residues; that stretch reads ESNATQSNNDMTLSK. A coiled-coil region spans residues 137 to 165; it reads YKEKKIEEELNQIKAMLRETKRDITKYTC.

The protein resides in the cell membrane. This is an uncharacterized protein from Rickettsia prowazekii (strain Madrid E).